The primary structure comprises 468 residues: ATP synthase subunit beta (468 aa).

155–162 (GGAGVGKT) lines the ATP pocket.

This sequence belongs to the ATPase alpha/beta chains family. F-type ATPases have 2 components, CF(1) - the catalytic core - and CF(0) - the membrane proton channel. CF(1) has five subunits: alpha(3), beta(3), gamma(1), delta(1), epsilon(1). CF(0) has three main subunits: a(1), b(2) and c(9-12). The alpha and beta chains form an alternating ring which encloses part of the gamma chain. CF(1) is attached to CF(0) by a central stalk formed by the gamma and epsilon chains, while a peripheral stalk is formed by the delta and b chains.

It localises to the cell membrane. The enzyme catalyses ATP + H2O + 4 H(+)(in) = ADP + phosphate + 5 H(+)(out). Its function is as follows. Produces ATP from ADP in the presence of a proton gradient across the membrane. The catalytic sites are hosted primarily by the beta subunits. In Streptococcus pyogenes serotype M3 (strain ATCC BAA-595 / MGAS315), this protein is ATP synthase subunit beta.